The following is a 195-amino-acid chain: Replication restart protein PriC (195 aa).

This sequence belongs to the PriC family. Monomer. Component of the replication restart primosome, which is composed of PriA, PriB, PriC, DnaB and DnaT; DnaG primase associates transiently with this complex. Interacts with the C-terminus of SSB; this interaction is required to load the main replicative helicase onto substrate replication forks. Interacts with helicase DnaB alone and in the DnaB-DnaC complex, probably 1:1 binding with DnaB.

In terms of biological role, involved in the restart of stalled replication forks, which reloads the DnaB replicative helicase on sites other than the origin of replication. Recognizes abandoned replication forks and remodels DNA single-stranded binding protein (SSB) on ssDNA to uncover a loading site for DnaB. There are several restart pathways, the PriA-PriC pathway is a minor restart pathway. Part of the minor PriC-Rep pathway for restart of stalled replication forks, which has a different substrate specificity than PriA. Part of the major restart pathway with PriA, PriB, DnaB, DnaT and DnaG primase. priB and priC have redundant roles in the cell. The protein is Replication restart protein PriC of Haemophilus influenzae (strain ATCC 51907 / DSM 11121 / KW20 / Rd).